The chain runs to 220 residues: MKEYDYLFKIIVIGDSGTGKSSLLLRFADNTYSESYMSTIGVDFKIKTVKIDNTTIKLQIWDTAGQERFRTITSTYYRGAHGIICVYDVTNKLSFDHITETWLQDIDKYATSNVCKLLIGNKIDLAESRVVSADEAKHVAEQNNMNYIEASAKTDSNVEKAFTTIAKALKDKVTQYPSNAPASTVSLNTASKVPTNRGLTDSCQESSVFKKMNFSSGKCT.

14–21 (GDSGTGKS) is a GTP binding site. Residues 36-44 (YMSTIGVDF) carry the Effector region motif. Residues 62-66 (DTAGQ) and 121-124 (NKID) each bind GTP. The S-geranylgeranyl cysteine moiety is linked to residue Cys219.

Belongs to the small GTPase superfamily. Rab family.

Its subcellular location is the cell membrane. In terms of biological role, protein transport. Probably involved in vesicular traffic from ER to Golgi. The sequence is that of Ras-related protein Rab-1 (rab1) from Theileria parva (East coast fever infection agent).